We begin with the raw amino-acid sequence, 211 residues long: Large ribosomal subunit protein uL4 (211 aa).

The tract at residues 40-85 is disordered; sequence QQAHSRQGTASTLTRSEVRGGGRKPYKQKGTGRARQGSIRTPLRPG. A compositionally biased stretch (polar residues) spans 41–54; it reads QAHSRQGTASTLTR. Residues 60 to 71 are compositionally biased toward basic residues; that stretch reads GGRKPYKQKGTG.

This sequence belongs to the universal ribosomal protein uL4 family. In terms of assembly, part of the 50S ribosomal subunit.

Its function is as follows. One of the primary rRNA binding proteins, this protein initially binds near the 5'-end of the 23S rRNA. It is important during the early stages of 50S assembly. It makes multiple contacts with different domains of the 23S rRNA in the assembled 50S subunit and ribosome. Functionally, forms part of the polypeptide exit tunnel. The chain is Large ribosomal subunit protein uL4 from Prochlorococcus marinus (strain NATL2A).